The chain runs to 168 residues: ATP synthase subunit b (168 aa).

Residues 9-29 (AIPFGTIAYTLFIFLLLLVML) form a helical membrane-spanning segment.

The protein belongs to the ATPase B chain family. In terms of assembly, F-type ATPases have 2 components, F(1) - the catalytic core - and F(0) - the membrane proton channel. F(1) has five subunits: alpha(3), beta(3), gamma(1), delta(1), epsilon(1). F(0) has three main subunits: a(1), b(2) and c(10-14). The alpha and beta chains form an alternating ring which encloses part of the gamma chain. F(1) is attached to F(0) by a central stalk formed by the gamma and epsilon chains, while a peripheral stalk is formed by the delta and b chains.

The protein localises to the cell membrane. In terms of biological role, f(1)F(0) ATP synthase produces ATP from ADP in the presence of a proton or sodium gradient. F-type ATPases consist of two structural domains, F(1) containing the extramembraneous catalytic core and F(0) containing the membrane proton channel, linked together by a central stalk and a peripheral stalk. During catalysis, ATP synthesis in the catalytic domain of F(1) is coupled via a rotary mechanism of the central stalk subunits to proton translocation. Its function is as follows. Component of the F(0) channel, it forms part of the peripheral stalk, linking F(1) to F(0). This Bacillus cereus (strain ATCC 10987 / NRS 248) protein is ATP synthase subunit b.